We begin with the raw amino-acid sequence, 291 residues long: Presqualene diphosphate synthase (291 aa).

Positions 1 to 23 (MTSAMKKIQPEAFSEKSSDSQAS) are disordered.

This sequence belongs to the phytoene/squalene synthase family. HpnD subfamily.

It carries out the reaction 2 (2E,6E)-farnesyl diphosphate = presqualene diphosphate + diphosphate. Its pathway is secondary metabolite biosynthesis; hopanoid biosynthesis. In terms of biological role, involved in the biosynthesis of the hopanoid precursor squalene (SQ) from farnesyl diphosphate (FPP). Catalyzes the first step, the formation of presqualene diphosphate (PSPP) from two molecules of FPP. In Zymomonas mobilis subsp. mobilis (strain ATCC 31821 / ZM4 / CP4), this protein is Presqualene diphosphate synthase.